Here is a 49-residue protein sequence, read N- to C-terminus: Soritesidine (49 aa).

It localises to the secreted. Very potent toxin that exhibits a wide range of toxicities over various organisms and cells including brine shrimp larvae (Artemia salina), sea hare eggs (Aplysia kurodai), mice, and cultured mammalian cells. An SOR-containing fraction cleaves plasmid DNA in a bivalent metal ion dependent manner suggesting genotoxicity of SOR. The protein is Soritesidine of Spongosorites sp. (strain QM G324170) (Okinawan marine Sponge).